The chain runs to 437 residues: Chaperone SurA (437 aa).

The signal sequence occupies residues 1-27 (MHNHVFKTIARHGLIALFFFFSISAMA). 2 PpiC domains span residues 179 to 280 (QDEF…KLLN) and 290 to 388 (VDQT…QVLE).

The protein resides in the periplasm. The catalysed reaction is [protein]-peptidylproline (omega=180) = [protein]-peptidylproline (omega=0). Functionally, chaperone involved in the correct folding and assembly of outer membrane proteins. Recognizes specific patterns of aromatic residues and the orientation of their side chains, which are found more frequently in integral outer membrane proteins. May act in both early periplasmic and late outer membrane-associated steps of protein maturation. The polypeptide is Chaperone SurA (Methylobacillus flagellatus (strain ATCC 51484 / DSM 6875 / VKM B-1610 / KT)).